The primary structure comprises 1940 residues: Myosin-3 (1940 aa).

Positions 33–82 constitute a Myosin N-terminal SH3-like domain; sequence DAKTYCFVVDSKEEYVKGKIKSSQDGKVTVETEDSRTLVVKPEDVYAMNP. Positions 86-779 constitute a Myosin motor domain; that stretch reads DKIEDMAMLT…LLGTLEEMRD (694 aa). The residue at position 130 (Lys130) is an N6,N6,N6-trimethyllysine. 179-186 lines the ATP pocket; that stretch reads GESGAGKT. Actin-binding regions lie at residues 656 to 678 and 758 to 772; these read LNKL…IPNE and KFGH…GLLG. The IQ domain occupies 782 to 811; sequence LAKLITRTQAVCRGFLMRVEFQKMMQRRES. A coiled-coil region spans residues 841 to 1928; the sequence is LKSAETEKEM…NKLRAKTRDF (1088 aa). A disordered region spans residues 1260 to 1289; the sequence is ARGKNEEMQRSLSELTTQKSRLQTEAGELS. A compositionally biased stretch (polar residues) spans 1269-1282; it reads RSLSELTTQKSRLQ.

The protein belongs to the TRAFAC class myosin-kinesin ATPase superfamily. Myosin family. As to quaternary structure, muscle myosin is a hexameric protein that consists of 2 heavy chain subunits (MHC), 2 alkali light chain subunits (MLC) and 2 regulatory light chain subunits (MLC-2).

Its subcellular location is the cytoplasm. It is found in the myofibril. Its function is as follows. Muscle contraction. The chain is Myosin-3 (Myh3) from Mus musculus (Mouse).